A 166-amino-acid polypeptide reads, in one-letter code: Interferon gamma (166 aa).

A signal peptide spans Met1–Cys23. Gln24 bears the Pyrrolidone carboxylic acid mark. N-linked (GlcNAc...) asparagine glycosylation is present at Asn48. A glycan (N-linked (GlcNAc...) asparagine; in dimeric form) is linked at Asn120. The disordered stretch occupies residues Ala147–Gln166. Over residues Thr149–Gln166 the composition is skewed to basic residues. Positions Arg162–Gln166 are excised as a propeptide.

Belongs to the type II (or gamma) interferon family. As to quaternary structure, homodimer. Interacts with IFNGR1 (via extracellular domain); this interaction promotes IFNGR1 dimerization. In terms of processing, proteolytic processing produces C-terminal heterogeneity, with proteins ending alternatively at Gly-150, Met-157 or Gly-161. As to expression, released primarily from activated T lymphocytes.

It localises to the secreted. In terms of biological role, type II interferon produced by immune cells such as T-cells and NK cells that plays crucial roles in antimicrobial, antiviral, and antitumor responses by activating effector immune cells and enhancing antigen presentation. Primarily signals through the JAK-STAT pathway after interaction with its receptor IFNGR1 to affect gene regulation. Upon IFNG binding, IFNGR1 intracellular domain opens out to allow association of downstream signaling components JAK2, JAK1 and STAT1, leading to STAT1 activation, nuclear translocation and transcription of IFNG-regulated genes. Many of the induced genes are transcription factors such as IRF1 that are able to further drive regulation of a next wave of transcription. Plays a role in class I antigen presentation pathway by inducing a replacement of catalytic proteasome subunits with immunoproteasome subunits. In turn, increases the quantity, quality, and repertoire of peptides for class I MHC loading. Increases the efficiency of peptide generation also by inducing the expression of activator PA28 that associates with the proteasome and alters its proteolytic cleavage preference. Up-regulates as well MHC II complexes on the cell surface by promoting expression of several key molecules such as cathepsins B/CTSB, H/CTSH, and L/CTSL. Participates in the regulation of hematopoietic stem cells during development and under homeostatic conditions by affecting their development, quiescence, and differentiation. This Homo sapiens (Human) protein is Interferon gamma (IFNG).